We begin with the raw amino-acid sequence, 129 residues long: UPF0102 protein CPS_4433 (129 aa).

The protein belongs to the UPF0102 family.

This chain is UPF0102 protein CPS_4433, found in Colwellia psychrerythraea (strain 34H / ATCC BAA-681) (Vibrio psychroerythus).